The following is a 234-amino-acid chain: Glucosamine-6-phosphate deaminase (234 aa).

D62 (proton acceptor; for enolization step) is an active-site residue. N128 functions as the For ring-opening step in the catalytic mechanism. H130 acts as the Proton acceptor; for ring-opening step in catalysis. The active-site For ring-opening step is E135.

Belongs to the glucosamine/galactosamine-6-phosphate isomerase family. NagB subfamily.

It catalyses the reaction alpha-D-glucosamine 6-phosphate + H2O = beta-D-fructose 6-phosphate + NH4(+). It functions in the pathway amino-sugar metabolism; N-acetylneuraminate degradation; D-fructose 6-phosphate from N-acetylneuraminate: step 5/5. In terms of biological role, catalyzes the reversible isomerization-deamination of glucosamine 6-phosphate (GlcN6P) to form fructose 6-phosphate (Fru6P) and ammonium ion. This chain is Glucosamine-6-phosphate deaminase, found in Streptococcus equi subsp. equi (strain 4047).